A 255-amino-acid chain; its full sequence is Probable transcriptional regulatory protein CMS0715 (255 aa).

Belongs to the TACO1 family.

Its subcellular location is the cytoplasm. This is Probable transcriptional regulatory protein CMS0715 from Clavibacter sepedonicus (Clavibacter michiganensis subsp. sepedonicus).